Consider the following 154-residue polypeptide: Small ribosomal subunit protein uS9 (154 aa).

Disordered stretches follow at residues 1–33 and 115–154; these read MVPP…SGLG and PENN…YSKR. Over residues 135–154 the composition is skewed to basic residues; that stretch reads KERKKAGLKKARKAPQYSKR.

It belongs to the universal ribosomal protein uS9 family.

The sequence is that of Small ribosomal subunit protein uS9 from Tropheryma whipplei (strain TW08/27) (Whipple's bacillus).